Consider the following 488-residue polypeptide: Glycogen synthase (488 aa).

An ADP-alpha-D-glucose-binding site is contributed by lysine 17.

This sequence belongs to the glycosyltransferase 1 family. Bacterial/plant glycogen synthase subfamily.

The enzyme catalyses [(1-&gt;4)-alpha-D-glucosyl](n) + ADP-alpha-D-glucose = [(1-&gt;4)-alpha-D-glucosyl](n+1) + ADP + H(+). Its pathway is glycan biosynthesis; glycogen biosynthesis. In terms of biological role, synthesizes alpha-1,4-glucan chains using ADP-glucose. The sequence is that of Glycogen synthase from Nitratidesulfovibrio vulgaris (strain DSM 19637 / Miyazaki F) (Desulfovibrio vulgaris).